The sequence spans 121 residues: Large ribosomal subunit protein uL14 (121 aa).

This sequence belongs to the universal ribosomal protein uL14 family. In terms of assembly, part of the 50S ribosomal subunit. Forms a cluster with proteins L3 and L19. In the 70S ribosome, L14 and L19 interact and together make contacts with the 16S rRNA in bridges B5 and B8.

Functionally, binds to 23S rRNA. Forms part of two intersubunit bridges in the 70S ribosome. In Bacteroides fragilis (strain ATCC 25285 / DSM 2151 / CCUG 4856 / JCM 11019 / LMG 10263 / NCTC 9343 / Onslow / VPI 2553 / EN-2), this protein is Large ribosomal subunit protein uL14.